Here is a 497-residue protein sequence, read N- to C-terminus: Guanosine-5'-triphosphate,3'-diphosphate pyrophosphatase (497 aa).

Belongs to the GppA/Ppx family. GppA subfamily.

The enzyme catalyses guanosine 3'-diphosphate 5'-triphosphate + H2O = guanosine 3',5'-bis(diphosphate) + phosphate + H(+). It participates in purine metabolism; ppGpp biosynthesis; ppGpp from GTP: step 2/2. In terms of biological role, catalyzes the conversion of pppGpp to ppGpp. Guanosine pentaphosphate (pppGpp) is a cytoplasmic signaling molecule which together with ppGpp controls the 'stringent response', an adaptive process that allows bacteria to respond to amino acid starvation, resulting in the coordinated regulation of numerous cellular activities. The protein is Guanosine-5'-triphosphate,3'-diphosphate pyrophosphatase of Photobacterium profundum (strain SS9).